Consider the following 219-residue polypeptide: Thymidylate kinase (219 aa).

An ATP-binding site is contributed by 9 to 16; sequence GIEGSGKT.

Belongs to the thymidylate kinase family.

It catalyses the reaction dTMP + ATP = dTDP + ADP. Functionally, phosphorylation of dTMP to form dTDP in both de novo and salvage pathways of dTTP synthesis. This chain is Thymidylate kinase, found in Pelobacter propionicus (strain DSM 2379 / NBRC 103807 / OttBd1).